Reading from the N-terminus, the 175-residue chain is Gamma-crystallin M1 (175 aa).

Beta/gamma crystallin 'Greek key' domains lie at 2 to 40 (GKII…RVES), 41 to 86 (GCFM…RYPY), 89 to 121 (FRMR…RMSD), and 130 to 172 (GHWL…RRIT).

Belongs to the beta/gamma-crystallin family. Monomer.

Crystallins are the dominant structural components of the vertebrate eye lens. The sequence is that of Gamma-crystallin M1 (GM1) from Chiloscyllium indicum (Slender bamboo shark).